Reading from the N-terminus, the 92-residue chain is MLRETSEGVILSVIVAPNARETKIVGIDGTRGRVKVNVAAPPVKGKANKELMKFFKKLFGAEVVIVRGETSREKDLLIKGITKKEVIEKLEL.

It belongs to the UPF0235 family.

In Pyrococcus furiosus (strain ATCC 43587 / DSM 3638 / JCM 8422 / Vc1), this protein is UPF0235 protein PF1765.